A 388-amino-acid polypeptide reads, in one-letter code: Chorismate synthase (388 aa).

Residues Arg39 and Arg45 each coordinate NADP(+). FMN contacts are provided by residues 130 to 132, 251 to 252, Gly296, 311 to 315, and Arg337; these read RSS, NA, and KPIPT.

The protein belongs to the chorismate synthase family. As to quaternary structure, homotetramer. It depends on FMNH2 as a cofactor.

It carries out the reaction 5-O-(1-carboxyvinyl)-3-phosphoshikimate = chorismate + phosphate. It functions in the pathway metabolic intermediate biosynthesis; chorismate biosynthesis; chorismate from D-erythrose 4-phosphate and phosphoenolpyruvate: step 7/7. In terms of biological role, catalyzes the anti-1,4-elimination of the C-3 phosphate and the C-6 proR hydrogen from 5-enolpyruvylshikimate-3-phosphate (EPSP) to yield chorismate, which is the branch point compound that serves as the starting substrate for the three terminal pathways of aromatic amino acid biosynthesis. This reaction introduces a second double bond into the aromatic ring system. This Streptococcus pyogenes serotype M1 protein is Chorismate synthase.